The primary structure comprises 251 residues: Ubiquinone/menaquinone biosynthesis C-methyltransferase UbiE (251 aa).

S-adenosyl-L-methionine contacts are provided by residues T74, D95, and 123–124; that span reads NA.

Belongs to the class I-like SAM-binding methyltransferase superfamily. MenG/UbiE family.

The enzyme catalyses a 2-demethylmenaquinol + S-adenosyl-L-methionine = a menaquinol + S-adenosyl-L-homocysteine + H(+). It carries out the reaction a 2-methoxy-6-(all-trans-polyprenyl)benzene-1,4-diol + S-adenosyl-L-methionine = a 5-methoxy-2-methyl-3-(all-trans-polyprenyl)benzene-1,4-diol + S-adenosyl-L-homocysteine + H(+). It functions in the pathway quinol/quinone metabolism; menaquinone biosynthesis; menaquinol from 1,4-dihydroxy-2-naphthoate: step 2/2. It participates in cofactor biosynthesis; ubiquinone biosynthesis. In terms of biological role, methyltransferase required for the conversion of demethylmenaquinol (DMKH2) to menaquinol (MKH2) and the conversion of 2-polyprenyl-6-methoxy-1,4-benzoquinol (DDMQH2) to 2-polyprenyl-3-methyl-6-methoxy-1,4-benzoquinol (DMQH2). In Shewanella halifaxensis (strain HAW-EB4), this protein is Ubiquinone/menaquinone biosynthesis C-methyltransferase UbiE.